Consider the following 75-residue polypeptide: Disintegrin CTF-II (75 aa).

Positions Glu1–Leu75 constitute a Disintegrin domain. 6 disulfide bridges follow: Cys9-Cys24, Cys11-Cys19, Cys18-Cys41, Cys32-Cys38, Cys37-Cys62, and Cys50-Cys69. The Cell attachment site signature appears at Arg54–Asp56.

It belongs to the venom metalloproteinase (M12B) family. P-II subfamily. P-IIa sub-subfamily. In terms of assembly, monomer (disintegrin). As to expression, expressed by the venom gland.

Its subcellular location is the secreted. In terms of biological role, inhibits fibrinogen interaction with platelet receptors, and inhibits aggregation induced by ADP, thrombin, collagen and platelet-activating factor. Acts by binding to the alpha-IIb/beta-3 (ITGA2B/ITGB3) on the platelet surface. This chain is Disintegrin CTF-II, found in Protobothrops flavoviridis (Habu).